We begin with the raw amino-acid sequence, 347 residues long: NADH-ubiquinone oxidoreductase chain 2 (347 aa).

Helical transmembrane passes span 3–23, 25–45, 59–79, 96–116, 122–144, 149–171, 178–198, 202–222, 247–267, 276–296, and 326–346; these read PLIF…VMMS, HWLM…PLLM, YFLT…INLL, IIMT…FWVP, ISLS…VLYV, INLD…GGLN, ILAY…VFNP, LLNL…FMVA, IMLS…WMII, ITLA…YMRL, and LPVL…ITLL.

The protein belongs to the complex I subunit 2 family. As to quaternary structure, core subunit of respiratory chain NADH dehydrogenase (Complex I) which is composed of 45 different subunits. Interacts with TMEM242.

The protein resides in the mitochondrion inner membrane. The catalysed reaction is a ubiquinone + NADH + 5 H(+)(in) = a ubiquinol + NAD(+) + 4 H(+)(out). In terms of biological role, core subunit of the mitochondrial membrane respiratory chain NADH dehydrogenase (Complex I) which catalyzes electron transfer from NADH through the respiratory chain, using ubiquinone as an electron acceptor. Essential for the catalytic activity and assembly of complex I. This is NADH-ubiquinone oxidoreductase chain 2 from Saccopteryx bilineata (Greater white-lined bat).